The following is a 534-amino-acid chain: C-22 sterol desaturase ERG5B (534 aa).

A helical transmembrane segment spans residues 43–61 (IAVTIFAVLIAYDQFMYIW). Heme is bound at residue Cys480.

It belongs to the cytochrome P450 family. Heme serves as cofactor.

It is found in the endoplasmic reticulum membrane. The enzyme catalyses 5-dehydroepisterol + NADPH + O2 + H(+) = ergosta-5,7,22,24(28)-tetraen-3beta-ol + NADP(+) + 2 H2O. Its pathway is steroid metabolism; ergosterol biosynthesis. In terms of biological role, C-22 sterol desaturase; part of the third module of ergosterol biosynthesis pathway that includes the late steps of the pathway. ERG5A and ERG5B convert 5-dehydroepisterol into ergosta-5,7,22,24(28)-tetraen-3beta-ol by forming the C-22(23) double bond in the sterol side chain. The third module or late pathway involves the ergosterol synthesis itself through consecutive reactions that mainly occur in the endoplasmic reticulum (ER) membrane. Firstly, the squalene synthase ERG9 catalyzes the condensation of 2 farnesyl pyrophosphate moieties to form squalene, which is the precursor of all steroids. Squalene synthase is crucial for balancing the incorporation of farnesyl diphosphate (FPP) into sterol and nonsterol isoprene synthesis. Secondly, squalene is converted into lanosterol by the consecutive action of the squalene epoxidase ERG1 and the lanosterol synthase ERG7. Then, the delta(24)-sterol C-methyltransferase ERG6 methylates lanosterol at C-24 to produce eburicol. Eburicol is the substrate of the sterol 14-alpha demethylase encoded by CYP51A, CYP51B and CYP51C, to yield 4,4,24-trimethyl ergosta-8,14,24(28)-trienol. CYP51B encodes the enzyme primarily responsible for sterol 14-alpha-demethylation, and plays an essential role in ascospore formation. CYP51A encodes an additional sterol 14-alpha-demethylase, induced on ergosterol depletion and responsible for the intrinsic variation in azole sensitivity. The third CYP51 isoform, CYP51C, does not encode a sterol 14-alpha-demethylase, but is required for full virulence on host wheat ears. The C-14 reductase ERG24 then reduces the C14=C15 double bond which leads to 4,4-dimethylfecosterol. A sequence of further demethylations at C-4, involving the C-4 demethylation complex containing the C-4 methylsterol oxidases ERG25, the sterol-4-alpha-carboxylate 3-dehydrogenase ERG26 and the 3-keto-steroid reductase ERG27, leads to the production of fecosterol via 4-methylfecosterol. ERG28 has a role as a scaffold to help anchor ERG25, ERG26 and ERG27 to the endoplasmic reticulum. The C-8 sterol isomerase ERG2 then catalyzes the reaction which results in unsaturation at C-7 in the B ring of sterols and thus converts fecosterol to episterol. The sterol-C5-desaturases ERG3A and ERG3BB then catalyze the introduction of a C-5 double bond in the B ring to produce 5-dehydroepisterol. The C-22 sterol desaturases ERG5A and ERG5B further convert 5-dehydroepisterol into ergosta-5,7,22,24(28)-tetraen-3beta-ol by forming the C-22(23) double bond in the sterol side chain. Finally, ergosta-5,7,22,24(28)-tetraen-3beta-ol is substrate of the C-24(28) sterol reductase ERG4 to produce ergosterol. The sequence is that of C-22 sterol desaturase ERG5B from Gibberella zeae (strain ATCC MYA-4620 / CBS 123657 / FGSC 9075 / NRRL 31084 / PH-1) (Wheat head blight fungus).